Reading from the N-terminus, the 422-residue chain is Gamma-glutamyl phosphate reductase (422 aa).

It belongs to the gamma-glutamyl phosphate reductase family.

It is found in the cytoplasm. The enzyme catalyses L-glutamate 5-semialdehyde + phosphate + NADP(+) = L-glutamyl 5-phosphate + NADPH + H(+). The protein operates within amino-acid biosynthesis; L-proline biosynthesis; L-glutamate 5-semialdehyde from L-glutamate: step 2/2. In terms of biological role, catalyzes the NADPH-dependent reduction of L-glutamate 5-phosphate into L-glutamate 5-semialdehyde and phosphate. The product spontaneously undergoes cyclization to form 1-pyrroline-5-carboxylate. This Saccharophagus degradans (strain 2-40 / ATCC 43961 / DSM 17024) protein is Gamma-glutamyl phosphate reductase.